A 309-amino-acid polypeptide reads, in one-letter code: MIRNIAIIGLGTMGPGMAARLARGGLQVVAYDVAPAAIERARSMLSVAETVLDALGIALPSAGVGTVRFTDDIGDAVSGADLVIENVPENISIKADVYRTIDGLIGQDTIVASDTSGIPITKLQAHISYPERMVGMHWSNPPHIIPMIEVIAGEKTAPQTVATIRDLIRSIGLLPVVVKKDVPGFVENRVLYALLREAVDLVERGVIDPEDLDTCVSWGIGYKIAVIGPMALLDMAGLDIYKSVSSFLNADLSNRDDVAPMVLEKTSASKFGIKSGEGMFCYTPEQTKALQAERARKLVAVRRILEGRE.

Residues 12–13 (TM), D32, 87–89 (VPE), and K94 contribute to the NAD(+) site.

Belongs to the 3-hydroxyacyl-CoA dehydrogenase family. In terms of assembly, homodimer.

It catalyses the reaction 5-formyl-3-hydroxy-2-methylpyridine-4-carboxylate + NAD(+) + H2O = 5-hydroxy-6-methylpyridine-3,4-dicarboxylate + NADH + 2 H(+). The enzyme catalyses 5-formyl-3-hydroxy-2-methylpyridine-4-carboxylate + NADH + H(+) = 4-pyridoxate + NAD(+). It participates in cofactor degradation; B6 vitamer degradation. Functionally, involved in the degradation of pyridoxine (vitamin B(6)). Catalyzes the oxidation of 5-formyl-3-hydroxy-2-methylpyridine-4-carboxylate (FHMPC) by NAD(+) to 5-hydroxy-6-methylpyridine-3,4-dicarboxylate (HMPDC). Can also catalyze the reduction of FHMPC by NADH to 4-pyridoxic acid. In Mesorhizobium japonicum (strain LMG 29417 / CECT 9101 / MAFF 303099) (Mesorhizobium loti (strain MAFF 303099)), this protein is 5-formyl-3-hydroxy-2-methylpyridine 4-carboxylate 5-dehydrogenase.